A 223-amino-acid polypeptide reads, in one-letter code: Urease accessory protein UreF (223 aa).

This sequence belongs to the UreF family. As to quaternary structure, ureD, UreF and UreG form a complex that acts as a GTP-hydrolysis-dependent molecular chaperone, activating the urease apoprotein by helping to assemble the nickel containing metallocenter of UreC. The UreE protein probably delivers the nickel.

It is found in the cytoplasm. In terms of biological role, required for maturation of urease via the functional incorporation of the urease nickel metallocenter. The polypeptide is Urease accessory protein UreF (Agrobacterium fabrum (strain C58 / ATCC 33970) (Agrobacterium tumefaciens (strain C58))).